The sequence spans 517 residues: MENFQGYLEKYEFCQHQCLYPLLFQEYIYALAYDYDLNTCLFSESVDELISYDNKYSSVLVKRLITRMYQQNYLINSVNHSKFNSFIANNHFFYSHFYSQMISEGFGIILEIPFSLEFLSFSKRKKRLKLQNLRSIHSIFSFLEDKLLXFHXMSDILIPYPIHFEILIQILQYWIQDISFLHLVRFFFFEYLNWNTLITSKNWVSIFLKENQRLFRFLYNSYVSEYEFVFLFLSTKSSYLRFTSFGIFLERIYFYGKIKHFRIVYVTSLQRTLWFFTDSFIHYVRYQGKAILSSRGTFLLMKKWKSYLVCFWQYYFHFWFQPNRILINQFFNYSFYFFGYLLSLKKNHLVVRGQILENSVLIDTMNNQLDTIVPVIXLIRSLSIATFXTXSGHPISKPIWADLSDRDILTRFGRISRNLFHYYSGSSKKWGLYRIKFILRLSCARTLARKHKSTVRTFMQKLGGMFLEEFFTEEEQVLSLVFQKIIHFSLHRSNRERIWYLDIIRINDLVNYFELRS.

This sequence belongs to the intron maturase 2 family. MatK subfamily.

The protein resides in the plastid. It localises to the chloroplast. Usually encoded in the trnK tRNA gene intron. Probably assists in splicing its own and other chloroplast group II introns. In Juncus effusus (Soft rush), this protein is Maturase K.